Reading from the N-terminus, the 393-residue chain is Lipid-A-disaccharide synthase (393 aa).

This sequence belongs to the LpxB family.

The enzyme catalyses a lipid X + a UDP-2-N,3-O-bis[(3R)-3-hydroxyacyl]-alpha-D-glucosamine = a lipid A disaccharide + UDP + H(+). It functions in the pathway bacterial outer membrane biogenesis; LPS lipid A biosynthesis. In terms of biological role, condensation of UDP-2,3-diacylglucosamine and 2,3-diacylglucosamine-1-phosphate to form lipid A disaccharide, a precursor of lipid A, a phosphorylated glycolipid that anchors the lipopolysaccharide to the outer membrane of the cell. The protein is Lipid-A-disaccharide synthase of Colwellia psychrerythraea (strain 34H / ATCC BAA-681) (Vibrio psychroerythus).